Here is a 317-residue protein sequence, read N- to C-terminus: Transcription factor EC (317 aa).

The tract at residues 1-90 (MTLDHRLFSQ…GLMNASCPSI (90 aa)) is necessary for transcriptional transactivation. Residues 110-163 (QKKDNHNLIERRRRYNINYRIKELGTLIPKSNDPDIRWNKGTILKASVDYIKWL) enclose the bHLH domain. Residues 242–317 (TSPEFYEQAV…SLSSEDGDEL (76 aa)) form a necessary for transcriptional transactivation region.

It belongs to the MiT/TFE family. Homodimer. Forms heterodimers with TFE3. Forms heterodimers with MITF. Interacts with MITF. As to expression, expressed in kidney, spleen, lung, liver, testis and muscle.

It is found in the nucleus. Functionally, transcriptional regulator that acts as a repressor or an activator. Acts as a transcriptional repressor on minimal promoter containing mu E3 enhancer sequence. Binds to mu E3 DNA sequence of the immunoglobulin heavy-chain gene enhancer. Acts as a transcriptional transactivator on the proximal promoter region of the tartrate-resistant acid phosphatase (TRAP) E-box containing promoter. Collaborates with MITF in target gene activation. Acts as a transcriptional repressor on minimal promoter containing mu E3 enhancer sequence. Binds to mu E3 DNA sequence of the immunoglobulin heavy-chain gene enhancer. Binds DNA in a homo- or heterodimeric form. This Rattus norvegicus (Rat) protein is Transcription factor EC (Tfec).